A 451-amino-acid polypeptide reads, in one-letter code: MVFGENQDLIRTHFQKEADKVRAMKTNWGLFTRTRMIAQSDYDFIVTYQQAENEAERSTVLSVFKEKAVYAFVHLMSQISKDDYVRYTLTLIDDMLREDVTRTIIFEDVAVLLKRSPFSFFMGLLHRQDQYIVHITFSILTKMAVFGNIKLSGDELDYCMGSLKEAMNRGTNNDYIVTAVRCMQTLFRFDPYRVSFVNINGYDSLTHALYSTRKCGFQIQYQIIFCMWLLTFNGHAAEVALSGNLIQTISGILGNCQKEKVIRIVVSTLRNLITSNQDVYMKKQAALQMIQNRIPTKLDHLENRKFTDVDLVEDMVYLQTELKKVVQVLTSFDEYENELRQGSLHWSPAHKCEVFWNENAHRLNDNRQELLKLLVAMLEKSNDPLVLCVAAHDIGEFVRYYPRGKLKVEQLGGKEAMMRLLTVKDPNVRYHALLAAQKLMINNWKDLGLEI.

The protein belongs to the V-ATPase H subunit family. In terms of assembly, V-ATPase is a heteromultimeric enzyme made up of two complexes: the ATP-hydrolytic V1 complex and the proton translocation V0 complex. The V1 complex consists of three catalytic AB heterodimers that form a heterohexamer, three peripheral stalks each consisting of EG heterodimers, one central rotor including subunits D and F, and the regulatory subunits C and H. The proton translocation complex V0 consists of the proton transport subunit a, a ring of proteolipid subunits c9c'', rotary subunit d, subunits e and f, and the accessory subunits vah-19/Ac45 and vah-20/PRR.

Subunit of the V1 complex of vacuolar(H+)-ATPase (V-ATPase), a multisubunit enzyme composed of a peripheral complex (V1) that hydrolyzes ATP and a membrane integral complex (V0) that translocates protons. V-ATPase is responsible for acidifying and maintaining the pH of intracellular compartments and in some cell types, is targeted to the plasma membrane, where it is responsible for acidifying the extracellular environment. Subunit H is essential for V-ATPase activity, but not for the assembly of the complex. This Caenorhabditis elegans protein is Probable V-type proton ATPase subunit H 1.